The sequence spans 381 residues: Flap endonuclease 1 (381 aa).

The tract at residues M1 to R105 is N-domain. Residue D34 coordinates Mg(2+). DNA contacts are provided by R47 and R71. Residues D87, E156, E158, D177, and D179 each coordinate Mg(2+). Positions E120–H251 are I-domain. DNA is bound at residue E156. DNA is bound by residues G229 and D231. D231 provides a ligand contact to Mg(2+). The interaction with PCNA stretch occupies residues V338–F346.

This sequence belongs to the XPG/RAD2 endonuclease family. FEN1 subfamily. As to quaternary structure, interacts with PCNA. Three molecules of FEN1 bind to one PCNA trimer with each molecule binding to one PCNA monomer. PCNA stimulates the nuclease activity without altering cleavage specificity. It depends on Mg(2+) as a cofactor. Post-translationally, phosphorylated. Phosphorylation upon DNA damage induces relocalization to the nuclear plasma.

Its subcellular location is the nucleus. It is found in the nucleolus. It localises to the nucleoplasm. The protein localises to the mitochondrion. Functionally, structure-specific nuclease with 5'-flap endonuclease and 5'-3' exonuclease activities involved in DNA replication and repair. During DNA replication, cleaves the 5'-overhanging flap structure that is generated by displacement synthesis when DNA polymerase encounters the 5'-end of a downstream Okazaki fragment. It enters the flap from the 5'-end and then tracks to cleave the flap base, leaving a nick for ligation. Also involved in the long patch base excision repair (LP-BER) pathway, by cleaving within the apurinic/apyrimidinic (AP) site-terminated flap. Acts as a genome stabilization factor that prevents flaps from equilibrating into structures that lead to duplications and deletions. Also possesses 5'-3' exonuclease activity on nicked or gapped double-stranded DNA, and exhibits RNase H activity. Also involved in replication and repair of rDNA and in repairing mitochondrial DNA. This Candida glabrata (strain ATCC 2001 / BCRC 20586 / JCM 3761 / NBRC 0622 / NRRL Y-65 / CBS 138) (Yeast) protein is Flap endonuclease 1.